An 891-amino-acid chain; its full sequence is MTKLTVKALSEDIGTPVDRLLQQFSDAGINKKDGDSVSEGEKQSLLIHLKKEHGSADESASPTRLTLQRKTRSTLSVAGSGGKSKDVQVEVRKKRTYVKASTLEEEKKTEQMKVEAGDKAKRDAEEAAVRELEQKAKREAEEKAKREAEAEVKVKRDAEQTAKRTKTEKAKKEMTTKNDQAKTEADELKLRQETEATRKAEAEAAKLVEDARKLAEENEGRWKEEEQKKTAAEKTADYHVTTSTHAREAEDAADRKDEQQPRRRKKKAKAAPVERGGRNQRGGRNRKPQVNKPTSMQHGFDKSATVAKQDVAIGETIIVSELANKMSVKATEVIKVMMKMGAMATINQVIDQETAALVAEEMGHKVVLRKENELEEAVLSDRDNSATVEGRAPVVTIMGHVDHGKTSTLDYIRRAHVADAEAGGITQHIGAYHVETDNGMITFLDTPGHAAFTAMRARGAQATDIVVLVVAADDGVMPQTIEAIQHAKAAGVPLIVAVNKIDKEGANPDNVKNELAQYDIIPEEWGGENMFVHISAKQGTNIEGLLEAILLQSEVLELTAVKEGMASGVVVESRLDKGRGPVATVLVQSGTLHKGDIVLCGQEYGRVRAMRDENGKDIDSAGPSIPVEILGLSGVPASGDEATVVRDERKAREVANYRQGKFRDVKLARQQKAKLENMFANMEAGEVAECNVVLKADVQGSVEAIADSLRKLSTDEVKVNIVGSGVGGITETDATLAAASNAILLGFNVRADTSARRTIENENLDLRYYSIIYQLIDEVKQAMGGMLAPEFRQEIIGLAQVREVFKSPKIGAVAGCMVTEGTIKRNNPIRVLRDNIVIYEGELESLRRFKDDMPEVKNGYECGIGVKNYNDVRVGDQIEVFEIVEIQRTLD.

The interval 50–303 (KKEHGSADES…TSMQHGFDKS (254 aa)) is disordered. Composition is skewed to basic and acidic residues over residues 102–237 (TLEE…KTAD) and 245–261 (HARE…EQQP). Residues 390 to 559 (GRAPVVTIMG…LLQSEVLELT (170 aa)) form the tr-type G domain. The segment at 399-406 (GHVDHGKT) is G1. 399 to 406 (GHVDHGKT) serves as a coordination point for GTP. Residues 424–428 (GITQH) form a G2 region. The interval 445–448 (DTPG) is G3. GTP is bound by residues 445 to 449 (DTPGH) and 499 to 502 (NKID). The segment at 499–502 (NKID) is G4. The segment at 535–537 (SAK) is G5.

Belongs to the TRAFAC class translation factor GTPase superfamily. Classic translation factor GTPase family. IF-2 subfamily.

It localises to the cytoplasm. Functionally, one of the essential components for the initiation of protein synthesis. Protects formylmethionyl-tRNA from spontaneous hydrolysis and promotes its binding to the 30S ribosomal subunits. Also involved in the hydrolysis of GTP during the formation of the 70S ribosomal complex. The polypeptide is Translation initiation factor IF-2 (Aliivibrio salmonicida (strain LFI1238) (Vibrio salmonicida (strain LFI1238))).